Here is a 328-residue protein sequence, read N- to C-terminus: Fructokinase-2 (328 aa).

It belongs to the carbohydrate kinase PfkB family.

It catalyses the reaction D-fructose + ATP = D-fructose 6-phosphate + ADP + H(+). It functions in the pathway glycan biosynthesis; starch biosynthesis. In terms of biological role, may play an important role in maintaining the flux of carbon towards starch formation. The protein is Fructokinase-2 (FRK2) of Solanum lycopersicum (Tomato).